An 88-amino-acid polypeptide reads, in one-letter code: Large ribosomal subunit protein bL27 (88 aa).

The protein belongs to the bacterial ribosomal protein bL27 family.

The chain is Large ribosomal subunit protein bL27 from Acidobacterium capsulatum (strain ATCC 51196 / DSM 11244 / BCRC 80197 / JCM 7670 / NBRC 15755 / NCIMB 13165 / 161).